Consider the following 239-residue polypeptide: Sensory rhodopsin-2 (239 aa).

The Extracellular segment spans residues 1–3 (MVG). The helical transmembrane segment at 4–25 (LTTLFWLGAIGMLVGTLAFAWA) threads the bilayer. The Cytoplasmic segment spans residues 26-33 (GRDAGSGE). A helical transmembrane segment spans residues 34-55 (RRYYVTLVGISGIAAVAYVVMA). The Extracellular portion of the chain corresponds to 56 to 69 (LGVGWVPVAERTVF). Residues 70–91 (APRYIDWILTTPLIVYFLGLLA) form a helical membrane-spanning segment. At 92-94 (GLD) the chain is on the cytoplasmic side. The chain crosses the membrane as a helical span at residues 95–117 (SREFGIVITLNTVVMLAGFAGAM). The Extracellular segment spans residues 118–121 (VPGI). The chain crosses the membrane as a helical span at residues 122 to 149 (ERYALFGMGAVAFLGLVYYLVGPMTESA). At 150-153 (SQRS) the chain is on the cytoplasmic side. Residues 154–181 (SGIKSLYVRLRNLTVILWAIYPFIWLLG) traverse the membrane as a helical segment. The Extracellular segment spans residues 182 to 189 (PPGVALLT). Residues 190 to 222 (PTVDVALIVYLDLVTKVGFGFIALDAAATLRAE) traverse the membrane as a helical segment. K205 bears the N6-(retinylidene)lysine mark. Topologically, residues 223–239 (HGESLAGVDTDAPAVAD) are cytoplasmic.

It belongs to the archaeal/bacterial/fungal opsin family. Homodimer. Interacts with HTR-II.

The protein resides in the cell membrane. Photophobic photoreceptor responsible for the negative phototaxis. Activates the sensory rhodopsin II transducer (HTR-II) in response to blue light. This is Sensory rhodopsin-2 (sop2) from Natronomonas pharaonis (Natronobacterium pharaonis).